The sequence spans 251 residues: MTNAVTVKNITFQEGETLICVPLIGKTLDEILGNAHGLVDAGADIIEWRVDHFAQVREMAQVMAALAEIRGALKALPLLFTFRSKKEGGETELSDEAYFALNREAARSGLVDVIDIELFNDEAQIRALVDDAHAAGVKVIMSNHDFHKTPAQEDIIYRLRRMQDLGADLPKIAVMPQSPQDVLTLLAATLTMKEKYATRPLITMSMGKSGGVSRVTGRLFGSAMTFGTVGQASAPGQIAIAKLREVMDILS.

3-dehydroquinate-binding positions include E47–R49 and R83. The Proton donor/acceptor role is filled by H144. K171 (schiff-base intermediate with substrate) is an active-site residue. 3-dehydroquinate is bound by residues R214, S233, and Q237.

The protein belongs to the type-I 3-dehydroquinase family. As to quaternary structure, homodimer.

It carries out the reaction 3-dehydroquinate = 3-dehydroshikimate + H2O. Its pathway is metabolic intermediate biosynthesis; chorismate biosynthesis; chorismate from D-erythrose 4-phosphate and phosphoenolpyruvate: step 3/7. Its function is as follows. Involved in the third step of the chorismate pathway, which leads to the biosynthesis of aromatic amino acids. Catalyzes the cis-dehydration of 3-dehydroquinate (DHQ) and introduces the first double bond of the aromatic ring to yield 3-dehydroshikimate. The chain is 3-dehydroquinate dehydratase from Klebsiella pneumoniae subsp. pneumoniae (strain ATCC 700721 / MGH 78578).